Here is a 153-residue protein sequence, read N- to C-terminus: Pheromone-binding protein Gp-9 (153 aa).

An N-terminal signal peptide occupies residues 1 to 19 (MKTFVLHIFIFALVAFASA). Disulfide bonds link Cys37–Cys77, Cys73–Cys129, and Cys118–Cys138.

It belongs to the PBP/GOBP family. In terms of assembly, homodimer.

It localises to the secreted. In terms of biological role, colony queen number, a major feature of social organization, is associated with worker genotype for Gp-9. Colonies are headed by either a single reproductive queen (monogyne form) or multiple queens (polygyne form). Differences in worker Gp-9 genotypes between social forms may cause differences in workers' abilities to recognize queens and regulate their numbers. The sequence is that of Pheromone-binding protein Gp-9 from Solenopsis substituta (Fire ant).